A 350-amino-acid polypeptide reads, in one-letter code: Transmembrane protein 185B (350 aa).

7 helical membrane passes run 16 to 36 (LIYT…DGII), 41 to 61 (WAVF…ASVG), 81 to 101 (FKAM…EVLV), 111 to 131 (FWLL…AACV), 168 to 188 (WLVV…VVLY), 211 to 231 (VTMA…EVLL), and 240 to 260 (TFSY…LMAT).

This sequence belongs to the TMEM185 family.

The protein localises to the membrane. This is Transmembrane protein 185B (TMEM185B) from Homo sapiens (Human).